The following is a 602-amino-acid chain: Translation factor GUF1 homolog, organellar chromatophore (602 aa).

The tr-type G domain occupies 7–189; the sequence is SRIRNFCIIA…AIVERIPPPV (183 aa). GTP is bound by residues 16–23, 82–86, and 136–139; these read AHIDHGKS, DTPGH, and NKID.

It belongs to the TRAFAC class translation factor GTPase superfamily. Classic translation factor GTPase family. LepA subfamily.

Its subcellular location is the plastid. The protein resides in the organellar chromatophore. The enzyme catalyses GTP + H2O = GDP + phosphate + H(+). In terms of biological role, promotes protein synthesis. May act as a fidelity factor of the translation reaction, by catalyzing a one-codon backward translocation of tRNAs on improperly translocated ribosomes. This is Translation factor GUF1 homolog, organellar chromatophore from Paulinella chromatophora.